A 380-amino-acid polypeptide reads, in one-letter code: 1-deoxy-D-xylulose 5-phosphate reductoisomerase (380 aa).

Positions 10, 11, 12, 13, 36, 37, 38, and 120 each coordinate NADPH. A 1-deoxy-D-xylulose 5-phosphate-binding site is contributed by Lys-121. Glu-122 contacts NADPH. Asp-146 provides a ligand contact to Mn(2+). 1-deoxy-D-xylulose 5-phosphate is bound by residues Ser-147, Glu-148, Ser-172, and His-195. Position 148 (Glu-148) interacts with Mn(2+). Gly-201 lines the NADPH pocket. 1-deoxy-D-xylulose 5-phosphate contacts are provided by Ser-208, Asn-213, Lys-214, and Glu-217. Residue Glu-217 coordinates Mn(2+).

Belongs to the DXR family. Mg(2+) is required as a cofactor. Mn(2+) serves as cofactor.

The enzyme catalyses 2-C-methyl-D-erythritol 4-phosphate + NADP(+) = 1-deoxy-D-xylulose 5-phosphate + NADPH + H(+). It participates in isoprenoid biosynthesis; isopentenyl diphosphate biosynthesis via DXP pathway; isopentenyl diphosphate from 1-deoxy-D-xylulose 5-phosphate: step 1/6. Functionally, catalyzes the NADPH-dependent rearrangement and reduction of 1-deoxy-D-xylulose-5-phosphate (DXP) to 2-C-methyl-D-erythritol 4-phosphate (MEP). In Bacillus cereus (strain AH187), this protein is 1-deoxy-D-xylulose 5-phosphate reductoisomerase.